Reading from the N-terminus, the 231-residue chain is Large ribosomal subunit protein uL3 (231 aa).

Glutamine 151 is subject to N5-methylglutamine.

It belongs to the universal ribosomal protein uL3 family. Part of the 50S ribosomal subunit. Forms a cluster with proteins L14 and L19. Post-translationally, methylated by PrmB.

One of the primary rRNA binding proteins, it binds directly near the 3'-end of the 23S rRNA, where it nucleates assembly of the 50S subunit. This Granulibacter bethesdensis (strain ATCC BAA-1260 / CGDNIH1) protein is Large ribosomal subunit protein uL3.